Consider the following 348-residue polypeptide: Rhodopsin (348 aa).

Methionine 1 is subject to N-acetylmethionine. Residues 1–36 lie on the Extracellular side of the membrane; it reads MNGTEGPNFYVPFSNATGVVRSPFEYPQYYLAEPWQ. N-linked (GlcNAc...) asparagine glycosylation is found at asparagine 2 and asparagine 15. The chain crosses the membrane as a helical span at residues 37-61; sequence FSMLAAYMFLLIVLGFPINFLTLYV. Over 62-73 the chain is Cytoplasmic; the sequence is TVQHKKLRTPLN. Residues 74-96 traverse the membrane as a helical segment; it reads YILLNLAVADLFMVLGGFTSTLY. At 97–110 the chain is on the extracellular side; that stretch reads TSLHGYFVFGPTGC. A disulfide bond links cysteine 110 and cysteine 187. Residues 111-133 form a helical membrane-spanning segment; sequence NLEGFFATLGGEIALWSLVVLAI. A 'Ionic lock' involved in activated form stabilization motif is present at residues 134–136; sequence ERY. Topologically, residues 134 to 152 are cytoplasmic; it reads ERYVVVCKPMSNFRFGENH. A helical transmembrane segment spans residues 153–173; it reads AIMGVAFTWVMALACAAPPLA. Topologically, residues 174 to 202 are extracellular; it reads GWSRYIPEGLQCSCGIDYYTLKPEVNNES. A Zn(2+)-binding site is contributed by glutamate 201. The chain crosses the membrane as a helical span at residues 203–224; sequence FVIYMFVVHFTIPMIIIFFCYG. The Cytoplasmic portion of the chain corresponds to 225-252; that stretch reads QLVFTVKEAAAQQQESATTQKAEKEVTR. The helical transmembrane segment at 253-274 threads the bilayer; it reads MVIIMVIAFLICWVPYASVAFY. Residues 275–284 are Extracellular-facing; that stretch reads IFTHQGSNFG. Zn(2+) is bound at residue glutamine 279. A helical membrane pass occupies residues 285–309; it reads PIFMTIPAFFAKSAAIYNPVIYIMM. Position 296 is an N6-(retinylidene)lysine (lysine 296). Residues 310–348 are Cytoplasmic-facing; sequence NKQFRNCMLTTICCGKNPLGDDEASATVSKTETSQVAPA. 2 S-palmitoyl cysteine lipidation sites follow: cysteine 322 and cysteine 323. The tract at residues 330 to 348 is interaction with SAG; sequence DDEASATVSKTETSQVAPA. Serine 334 carries the post-translational modification Phosphoserine. Residue threonine 336 is modified to Phosphothreonine. At serine 338 the chain carries Phosphoserine. Threonine 340 and threonine 342 each carry phosphothreonine. Serine 343 carries the post-translational modification Phosphoserine.

Belongs to the G-protein coupled receptor 1 family. Opsin subfamily. As to quaternary structure, homodimer. May form a complex composed of RHO, GRK1 and RCVRN in a Ca(2+)-dependent manner; RCVRN prevents the interaction between GRK1 and RHO. Interacts with GRK1. Interacts (phosphorylated form) with SAG. Interacts with GNAT1. Interacts with GNAT3. SAG and G-proteins compete for a common binding site. Interacts with PRCD; the interaction promotes PRCD stability. Forms a complex with ASAP1 and ARF4. Forms a complex with ASAP1, RAB11A, Rabin8/RAB3IP, ARF4 and RAB11FIP3; the complex regulates Golgi-to-cilia rhodopsin/RHO transport in photoreceptors. Phosphorylated on some or all of the serine and threonine residues present in the C-terminal region. After activation by light, phosphorylated by GRK1 (in vitro). Post-translationally, contains one covalently linked retinal chromophore. Upon light absorption, the covalently bound 11-cis-retinal is converted to all-trans-retinal. After hydrolysis of the Schiff base and release of the covalently bound all-trans-retinal, active rhodopsin is regenerated by binding of a fresh molecule of 11-cis-retinal. Rod shaped photoreceptor cells which mediate vision in dim light.

Its subcellular location is the membrane. It localises to the cell projection. The protein resides in the cilium. It is found in the photoreceptor outer segment. In terms of biological role, photoreceptor required for image-forming vision at low light intensity. Required for photoreceptor cell viability after birth. Light-induced isomerization of the chromophore 11-cis-retinal to all-trans-retinal triggers a conformational change that activates signaling via G-proteins. Subsequent receptor phosphorylation mediates displacement of the bound G-protein alpha subunit by the arrestin SAG and terminates signaling. This chain is Rhodopsin (RHO), found in Homo sapiens (Human).